We begin with the raw amino-acid sequence, 405 residues long: Tryptophan synthase beta chain (405 aa).

Lys98 bears the N6-(pyridoxal phosphate)lysine mark.

Belongs to the TrpB family. In terms of assembly, tetramer of two alpha and two beta chains. Pyridoxal 5'-phosphate is required as a cofactor.

The enzyme catalyses (1S,2R)-1-C-(indol-3-yl)glycerol 3-phosphate + L-serine = D-glyceraldehyde 3-phosphate + L-tryptophan + H2O. Its pathway is amino-acid biosynthesis; L-tryptophan biosynthesis; L-tryptophan from chorismate: step 5/5. Its function is as follows. The beta subunit is responsible for the synthesis of L-tryptophan from indole and L-serine. This Xanthomonas euvesicatoria pv. vesicatoria (strain 85-10) (Xanthomonas campestris pv. vesicatoria) protein is Tryptophan synthase beta chain.